The primary structure comprises 172 residues: Large ribosomal subunit protein bL17 (172 aa).

The tract at residues 153 to 172 (AQAAEPVAAAEPATPATTAG) is disordered.

It belongs to the bacterial ribosomal protein bL17 family. In terms of assembly, part of the 50S ribosomal subunit. Contacts protein L32.

The polypeptide is Large ribosomal subunit protein bL17 (Sorangium cellulosum (strain So ce56) (Polyangium cellulosum (strain So ce56))).